The chain runs to 698 residues: Methionine--tRNA ligase (698 aa).

A 'HIGH' region motif is present at residues 18–28 (PYANGDLHVGH). Positions 149, 152, 161, and 165 each coordinate Zn(2+). Residue Thr-350 participates in ATP binding. The tract at residues 567–590 (EAADAGDEEGEDEDEEPPAADLEP) is disordered. Acidic residues predominate over residues 570 to 584 (DAGDEEGEDEDEEPP). The tRNA-binding domain occupies 600 to 698 (DFQDLDIRVA…EDAEPGTKVQ (99 aa)).

This sequence belongs to the class-I aminoacyl-tRNA synthetase family. MetG type 1 subfamily. In terms of assembly, homodimer. It depends on Zn(2+) as a cofactor.

It localises to the cytoplasm. The catalysed reaction is tRNA(Met) + L-methionine + ATP = L-methionyl-tRNA(Met) + AMP + diphosphate. Functionally, is required not only for elongation of protein synthesis but also for the initiation of all mRNA translation through initiator tRNA(fMet) aminoacylation. The polypeptide is Methionine--tRNA ligase (Natronomonas pharaonis (strain ATCC 35678 / DSM 2160 / CIP 103997 / JCM 8858 / NBRC 14720 / NCIMB 2260 / Gabara) (Halobacterium pharaonis)).